A 189-amino-acid polypeptide reads, in one-letter code: Large ribosomal subunit protein uL6 (189 aa).

The protein belongs to the universal ribosomal protein uL6 family. Part of the 50S ribosomal subunit.

In terms of biological role, this protein binds to the 23S rRNA, and is important in its secondary structure. It is located near the subunit interface in the base of the L7/L12 stalk, and near the tRNA binding site of the peptidyltransferase center. In Phocaeicola vulgatus (strain ATCC 8482 / DSM 1447 / JCM 5826 / CCUG 4940 / NBRC 14291 / NCTC 11154) (Bacteroides vulgatus), this protein is Large ribosomal subunit protein uL6.